The primary structure comprises 185 residues: uncharacterized protein (185 aa).

Residues 1–18 form the signal peptide; sequence MLLKLILILCFLVTLSLS. Residues 30-185 are disordered; sequence TQGPTIASGG…VQDCGEITGW (156 aa). The span at 86–101 shows a compositional bias: basic and acidic residues; it reads RAQEGGKKDTTKEQPK. Low complexity predominate over residues 103–116; sequence NNNNKNLGRHSSSG. A compositionally biased stretch (gly residues) spans 117–135; sequence SGSGSGSGCGVTGDTGTGS.

It is found in the secreted. This is an uncharacterized protein from Dictyostelium discoideum (Social amoeba).